Here is a 338-residue protein sequence, read N- to C-terminus: Ketol-acid reductoisomerase (NADP(+)) (338 aa).

The 181-residue stretch at 1 to 181 (MKVYYDKDAD…GGGKAGIIET (181 aa)) folds into the KARI N-terminal Rossmann domain. NADP(+) contacts are provided by residues 24–27 (YGSQ), Arg-47, and Ser-52. His-107 is a catalytic residue. Residue Gly-133 coordinates NADP(+). A KARI C-terminal knotted domain is found at 182–327 (NFREETETDL…EKLRAMMPWI (146 aa)). 4 residues coordinate Mg(2+): Asp-190, Glu-194, Glu-226, and Glu-230. Ser-251 is a substrate binding site.

The protein belongs to the ketol-acid reductoisomerase family. It depends on Mg(2+) as a cofactor.

The enzyme catalyses (2R)-2,3-dihydroxy-3-methylbutanoate + NADP(+) = (2S)-2-acetolactate + NADPH + H(+). It catalyses the reaction (2R,3R)-2,3-dihydroxy-3-methylpentanoate + NADP(+) = (S)-2-ethyl-2-hydroxy-3-oxobutanoate + NADPH + H(+). Its pathway is amino-acid biosynthesis; L-isoleucine biosynthesis; L-isoleucine from 2-oxobutanoate: step 2/4. It functions in the pathway amino-acid biosynthesis; L-valine biosynthesis; L-valine from pyruvate: step 2/4. In terms of biological role, involved in the biosynthesis of branched-chain amino acids (BCAA). Catalyzes an alkyl-migration followed by a ketol-acid reduction of (S)-2-acetolactate (S2AL) to yield (R)-2,3-dihydroxy-isovalerate. In the isomerase reaction, S2AL is rearranged via a Mg-dependent methyl migration to produce 3-hydroxy-3-methyl-2-ketobutyrate (HMKB). In the reductase reaction, this 2-ketoacid undergoes a metal-dependent reduction by NADPH to yield (R)-2,3-dihydroxy-isovalerate. This chain is Ketol-acid reductoisomerase (NADP(+)), found in Variovorax paradoxus (strain S110).